The chain runs to 332 residues: Probable farnesyl diphosphate synthase (332 aa).

3 residues coordinate isopentenyl diphosphate: Lys-75, Arg-78, and His-107. The Mg(2+) site is built by Asp-114 and Asp-120. Arg-125 serves as a coordination point for (2E)-geranyl diphosphate. An isopentenyl diphosphate-binding site is contributed by Arg-126. 4 residues coordinate (2E)-geranyl diphosphate: Lys-208, Ser-209, Gln-250, and Lys-267.

This sequence belongs to the FPP/GGPP synthase family. The cofactor is Mg(2+).

It is found in the cytoplasm. It carries out the reaction isopentenyl diphosphate + (2E)-geranyl diphosphate = (2E,6E)-farnesyl diphosphate + diphosphate. This Bradyrhizobium diazoefficiens (strain JCM 10833 / BCRC 13528 / IAM 13628 / NBRC 14792 / USDA 110) protein is Probable farnesyl diphosphate synthase (fppS).